A 307-amino-acid polypeptide reads, in one-letter code: MSKYESEFSCQDKFSVFYGTVATLFFTAMTTLTCPFQQLFIFLAFFEFAVVALYVCKSRFLQVLHFQYQSVAYCVPIFLFVTSIYYEFYPKETHEFLESFNFKIVKDFIEEIPIFFPSALWFLWTTRLFHTHTVLVRLNTEYRLDDPKSHDLGPIRQSSFHSSLNIAAITFFSILAYSGNESIENICFWIAIFELIMTVTYVFNNSWIMMIHFVGQAIVFSVIFFLLCCLLAYEYSPVAALEFLDSYGLVQVKSYVVRSPFFVASALSAVWFSRMMATHVFLVEVATDTRIHRHQMSNHFNRLIQNI.

This is an uncharacterized protein from Caenorhabditis elegans.